The sequence spans 306 residues: Homoserine kinase (306 aa).

90-100 (PLARGLGSSAS) provides a ligand contact to ATP.

It belongs to the GHMP kinase family. Homoserine kinase subfamily.

It localises to the cytoplasm. It carries out the reaction L-homoserine + ATP = O-phospho-L-homoserine + ADP + H(+). It functions in the pathway amino-acid biosynthesis; L-threonine biosynthesis; L-threonine from L-aspartate: step 4/5. Catalyzes the ATP-dependent phosphorylation of L-homoserine to L-homoserine phosphate. The sequence is that of Homoserine kinase from Staphylococcus epidermidis (strain ATCC 35984 / DSM 28319 / BCRC 17069 / CCUG 31568 / BM 3577 / RP62A).